We begin with the raw amino-acid sequence, 57 residues long: uncharacterized protein (57 aa).

Residues 1 to 57 form a disordered region; sequence MANHRGGSGNFAEDRERASEAGKKGGQHSGGNFKNDPQRASEAGKKGGKSSHGKSDN. 2 stretches are compositionally biased toward basic and acidic residues: residues 12–23 and 36–45; these read AEDRERASEAGK and DPQRASEAGK. The segment covering 46–57 has biased composition (basic residues); that stretch reads KGGKSSHGKSDN.

It belongs to the con-10 family.

This is an uncharacterized protein from Escherichia coli (strain K12).